The primary structure comprises 100 residues: Aspartyl/glutamyl-tRNA(Asn/Gln) amidotransferase subunit C (100 aa).

The protein belongs to the GatC family. Heterotrimer of A, B and C subunits.

It carries out the reaction L-glutamyl-tRNA(Gln) + L-glutamine + ATP + H2O = L-glutaminyl-tRNA(Gln) + L-glutamate + ADP + phosphate + H(+). The enzyme catalyses L-aspartyl-tRNA(Asn) + L-glutamine + ATP + H2O = L-asparaginyl-tRNA(Asn) + L-glutamate + ADP + phosphate + 2 H(+). Its function is as follows. Allows the formation of correctly charged Asn-tRNA(Asn) or Gln-tRNA(Gln) through the transamidation of misacylated Asp-tRNA(Asn) or Glu-tRNA(Gln) in organisms which lack either or both of asparaginyl-tRNA or glutaminyl-tRNA synthetases. The reaction takes place in the presence of glutamine and ATP through an activated phospho-Asp-tRNA(Asn) or phospho-Glu-tRNA(Gln). This is Aspartyl/glutamyl-tRNA(Asn/Gln) amidotransferase subunit C from Streptococcus pyogenes serotype M49 (strain NZ131).